A 478-amino-acid polypeptide reads, in one-letter code: Protein MAINTENANCE OF MERISTEMS (478 aa).

The segment at 459 to 478 (ASTTNKRKRREEQQQTDWSE) is disordered. Residues 464 to 468 (KRKRR) carry the Nuclear localization signal motif.

Expressed in root meristem, root vasculature, shoot apical meristem (SAM), leaf vasculature and ovules.

Its subcellular location is the nucleus. Required for the organization of the root apical meristem (RAM) and the shoot apical meristem (SAM). Required to maintain genome stability and cell division activity in meristematic cells. The polypeptide is Protein MAINTENANCE OF MERISTEMS (Arabidopsis thaliana (Mouse-ear cress)).